Here is a 965-residue protein sequence, read N- to C-terminus: Transmembrane channel-like protein 5 (965 aa).

2 stretches are compositionally biased toward polar residues: residues 1–10 (MSSFHKNSSY) and 20–31 (SGSQNHTQNYLR). The disordered stretch occupies residues 1–235 (MSSFHKNSSY…GAEEGDVYSP (235 aa)). The Extracellular portion of the chain corresponds to 1–417 (MSSFHKNSSY…YFSFLRWLLK (417 aa)). Over residues 61–70 (TNPDYHHSLA) the composition is skewed to basic and acidic residues. Residues 166–181 (QGNSYHSGPRSHSNLP) show a composition bias toward polar residues. Phosphoserine is present on S248. Residues 418–438 (FNIFSFVMNFSFIIIPQFTVG) traverse the membrane as a helical segment. Topologically, residues 439–444 (EKNTLQ) are cytoplasmic. Residues 445 to 467 (FTGLEFFTGAGYFRETVMYYGFY) traverse the membrane as a helical segment. Over 468–484 (TNSTIRHRMGGASYNMQ) the chain is Extracellular. A helical transmembrane segment spans residues 485–505 (LAYIFTIGACLVICFFSLLFS). Residues 506–578 (MAKYFRNNFI…NQKLTRFSVH (73 aa)) are Cytoplasmic-facing. Residues 579–599 (VAAWLVSTGITAACCVAVYYL) form a helical membrane-spanning segment. Residues 600–613 (AEYNSEFLKTHKNP) lie on the Extracellular side of the membrane. A helical membrane pass occupies residues 614–634 (GAVLLLPFVVSCINLAVPRFY). The Cytoplasmic portion of the chain corresponds to 635–657 (SMFRLVERYEIPRQEVYVLLIRN). A helical transmembrane segment spans residues 658-678 (IFLKISIVGILCYYWLNIVAL). Over 679 to 691 (SGEECWETLIGQD) the chain is Extracellular. Residues 692-712 (IYRLLLMDFVFSLADSLLGEF) form a helical membrane-spanning segment. At 713 to 747 (LRRLIGMKFITSLSLQEFDIARNVLELIYAQTLAW) the chain is on the cytoplasmic side. The chain crosses the membrane as a helical span at residues 748–768 (LGIFFCPLLPFIQMITLFIMF). Over 769-794 (YVKNVSLMMNFQPPSKAWRASQMITF) the chain is Extracellular. The chain crosses the membrane as a helical span at residues 795–815 (FIFLLFFPSFTGVLCTLAITI). At 816–859 (WRLKPSADCGPFRGLPSFIQSIYSWIDTLSHRPGYLWVVWIYQN) the chain is on the cytoplasmic side. Residues 860-880 (LIGSVHFFFILTLIVLIITYL) form a helical membrane-spanning segment. Over 881-965 (YWQITEGRKV…RSMQEENAIA (85 aa)) the chain is Extracellular.

It belongs to the TMC family.

The protein localises to the membrane. Functionally, probable component of an ion channel. Molecular function hasn't been characterized yet. The protein is Transmembrane channel-like protein 5 of Rattus norvegicus (Rat).